Consider the following 467-residue polypeptide: Protein PHOSPHATE STARVATION RESPONSE 3 (467 aa).

The interval 227–266 is disordered; it reads MSLPVSSCSDQEDLQDARSPAKVQLSSSRSSSGTASCNKP. The HTH myb-type domain occupies 262–322; that stretch reads SCNKPRLRWT…HLQKYRLAKY (61 aa). A DNA-binding region (H-T-H motif) is located at residues 293 to 318; the sequence is PKGVLKLMKVEGLTIYHIKSHLQKYR. Residues 327–337 are compositionally biased toward basic and acidic residues; it reads KEDKKQEEKKT. Disordered regions lie at residues 327-353 and 400-467; these read KEDKKQEEKKTKSVANGNDHAKKKSAQ and RESI…VHDE. Over residues 402-412 the composition is skewed to polar residues; the sequence is SISSMTSTTEG. Composition is skewed to basic and acidic residues over residues 419-428 and 438-467; these read PMEKTEDKAE and RITDTDAECHSKVDNKKTKPQADLEMVHDE.

The protein resides in the nucleus. Its function is as follows. Transcription factor involved in phosphate starvation signaling. Binds to P1BS, an imperfect palindromic sequence 5'-GNATATNC-3', to promote the expression of inorganic phosphate (Pi) starvation-responsive genes. Functionally redundant with PHR1 and PHR2 in regulating Pi starvation response and Pi homeostasis. This chain is Protein PHOSPHATE STARVATION RESPONSE 3, found in Oryza sativa subsp. indica (Rice).